The chain runs to 326 residues: Transposase InsH for insertion sequence element IS5Y (326 aa).

It belongs to the transposase 11 family.

Its function is as follows. Involved in the transposition of the insertion sequence IS5. The sequence is that of Transposase InsH for insertion sequence element IS5Y (insH5) from Escherichia coli (strain K12).